The primary structure comprises 306 residues: Glutaminase (306 aa).

Substrate contacts are provided by S64, N115, E159, N166, Y190, Y242, and V260.

It belongs to the glutaminase family. Homotetramer.

The catalysed reaction is L-glutamine + H2O = L-glutamate + NH4(+). The polypeptide is Glutaminase (Aliivibrio fischeri (strain ATCC 700601 / ES114) (Vibrio fischeri)).